We begin with the raw amino-acid sequence, 397 residues long: Succinate--CoA ligase [ADP-forming] subunit beta (397 aa).

The region spanning 9 to 254 (KALLRSYGAP…ETEEDPKELA (246 aa)) is the ATP-grasp domain. ATP is bound by residues Lys46, 53-55 (GRG), Glu109, Ser112, and Glu117. Positions 209 and 223 each coordinate Mg(2+). Substrate contacts are provided by residues Asn274 and 331 to 333 (GIM).

Belongs to the succinate/malate CoA ligase beta subunit family. In terms of assembly, heterotetramer of two alpha and two beta subunits. Mg(2+) is required as a cofactor.

The catalysed reaction is succinate + ATP + CoA = succinyl-CoA + ADP + phosphate. The enzyme catalyses GTP + succinate + CoA = succinyl-CoA + GDP + phosphate. The protein operates within carbohydrate metabolism; tricarboxylic acid cycle; succinate from succinyl-CoA (ligase route): step 1/1. Its function is as follows. Succinyl-CoA synthetase functions in the citric acid cycle (TCA), coupling the hydrolysis of succinyl-CoA to the synthesis of either ATP or GTP and thus represents the only step of substrate-level phosphorylation in the TCA. The beta subunit provides nucleotide specificity of the enzyme and binds the substrate succinate, while the binding sites for coenzyme A and phosphate are found in the alpha subunit. This chain is Succinate--CoA ligase [ADP-forming] subunit beta, found in Cereibacter sphaeroides (strain ATCC 17025 / ATH 2.4.3) (Rhodobacter sphaeroides).